Here is a 379-residue protein sequence, read N- to C-terminus: Caffeyl-CoA reductase-Etf complex subunit CarC (379 aa).

FAD contacts are provided by residues Phe122–Ser131 and Phe155–Thr157. Substrate is bound at residue Ser131. Asp239 to Arg242 provides a ligand contact to substrate. FAD is bound by residues Arg267, Gln278, and Gln335–Gly339. The active-site Proton acceptor is the Glu362. Residue Gly363 coordinates substrate. FAD is bound at residue Thr364–Gln366.

Belongs to the acyl-CoA dehydrogenase family. As to quaternary structure, part of the homotrimeric caffeyl-CoA reductase-Etf complex composed of (R)-2-hydroxyisocaproyl-CoA dehydratase CarC, and the electron transfer flavoprotein (ETF) alpha (CarE) and beta (CarD) subunits. It depends on FAD as a cofactor.

It localises to the cytoplasm. The enzyme catalyses hydrocaffeoyl-CoA + 2 reduced [2Fe-2S]-[ferredoxin] + 2 NAD(+) = (E)-caffeoyl-CoA + 2 oxidized [2Fe-2S]-[ferredoxin] + 2 NADH. In terms of biological role, the Caffeyl-CoA reductase-Etf complex catalyzes the reduction of caffeyl-CoA to yield hydrocaffeyl-CoA. It couples the endergonic ferredoxin reduction with NADH as reductant to the exergonic reduction of caffeoyl-CoA with the same reductant. It uses the mechanism of electron bifurcation to overcome the steep energy barrier in ferredoxin reduction. Also reduces 4-coumaroyl-CoA and feruloyl-CoA. This is Caffeyl-CoA reductase-Etf complex subunit CarC from Acetobacterium woodii (strain ATCC 29683 / DSM 1030 / JCM 2381 / KCTC 1655 / WB1).